A 333-amino-acid chain; its full sequence is uncharacterized protein (333 aa).

The tract at residues 234 to 333 (PPLAPTSAPA…GLSSEFDSDD (100 aa)) is disordered. A compositionally biased stretch (pro residues) spans 251–265 (VPPPVPAPPTPPPQE). Polar residues predominate over residues 324 to 333 (GLSSEFDSDD).

The protein resides in the cell projection. It is found in the cilium. It localises to the flagellum. This is an uncharacterized protein from Homo sapiens (Human).